The chain runs to 836 residues: Transcriptional regulatory protein UME6 (836 aa).

The span at 1–14 (MLDKARSQSKHMDE) shows a compositional bias: basic and acidic residues. Disordered regions lie at residues 1–77 (MLDK…IESL), 92–168 (STCA…CNGH), 218–332 (HLPP…DDQC), and 381–464 (NESS…GFFY). Polar residues-rich tracts occupy residues 39 to 48 (SRATLMNSSQ), 61 to 77 (GANS…IESL), and 92 to 112 (STCA…SLKV). Residue Ser-114 is modified to Phosphoserine. Positions 117 to 126 (DIKDDPKEND) are enriched in basic and acidic residues. Phosphoserine occurs at positions 141, 150, and 228. The span at 226–236 (AVSSPGTTAAG) shows a compositional bias: low complexity. A compositionally biased stretch (polar residues) spans 258–272 (TSANKNNGKTTNSPM). The segment covering 273 to 305 (SILSRNNSTNNNDNNSIQSSDSRESSNNNEIGG) has biased composition (low complexity). Phosphoserine is present on residues Ser-316 and Ser-318. Polar residues predominate over residues 316–325 (SPSNDSQVQH). The span at 381-398 (NESSSNNASSNTDTPTNS) shows a compositional bias: low complexity. Residues 399 to 414 (RHANTSSSITSRNNFQ) show a composition bias toward polar residues. A compositionally biased stretch (low complexity) spans 426 to 446 (PTSASSFTSTNNNNPQRNNIN). An SIN3-binding region spans residues 508–594 (NSASSSTKLD…QPIFESNNST (87 aa)). A disordered region spans residues 636–766 (NGKRIDRRLS…ATSSTSQGTR (131 aa)). Ser-645 bears the Phosphoserine mark. The span at 670-679 (VASQTNSDYN) shows a compositional bias: polar residues. Low complexity predominate over residues 680-702 (SLGESSTSSAPSSPSLKASSGLA). Basic residues predominate over residues 718 to 739 (SKGKNVKPKAKSKAKQSSKKRP). Residues 740-751 (NNTTSKSKANNS) are compositionally biased toward low complexity. Residues 771–798 (CWICRLRKKKCTEERPHCFNCERLKLDC) constitute a DNA-binding region (zn(2)-C6 fungal-type).

In terms of assembly, component of the RPD3C(L) complex composed of at least ASH1, CTI6, DEP1, PHO23, RPD3, RXT2, RXT3, SAP30, SDS3, SIN3, UME1 and UME6. Interacts with RIM11, MCK1 and IME1. In terms of processing, phosphorylated by RIM11 and MCK1.

It localises to the nucleus. Its function is as follows. Component of the RPD3C(L) histone deacetylase complex (HDAC) responsible for the deacetylation of lysine residues on the N-terminal part of the core histones (H2A, H2B, H3 and H4). Histone deacetylation gives a tag for epigenetic repression and plays an important role in transcriptional regulation, cell cycle progression and developmental events. Binds to the URS1 site (5'-AGCCGCCGA-3') and recruits the RPD3 histone deacetylase complex to the promoters to negatively regulate the expression of many genes including CAR1 (arginase), several required for sporulation, mating type switching, inositol metabolism, and oxidative carbon metabolism. Also recruits the ISW2 chromatin remodeling complex to promoters in a second gene repression pathway. Associates with the master regulator of meiosis IME1 in order to activate the expression of meiosis genes. Has both a positive and negative role in regulating phospholipid biosynthesis. The polypeptide is Transcriptional regulatory protein UME6 (UME6) (Saccharomyces cerevisiae (strain ATCC 204508 / S288c) (Baker's yeast)).